Reading from the N-terminus, the 557-residue chain is Eudesmanediol synthase (557 aa).

Mg(2+) is bound by residues Asp-310 and Asp-314. Substrate is bound by residues Asp-310, Asp-314, Arg-450, and Asn-453. Residues 310–314 (DDTFD) carry the DDXXD motif motif. Mg(2+) contacts are provided by Asn-453 and Ser-457.

Belongs to the terpene synthase family. Monomer. Mg(2+) is required as a cofactor. The cofactor is Mn(2+). Specifically expressed in roots.

It is found in the cytoplasm. The enzyme catalyses (2E,6E)-farnesyl diphosphate + 2 H2O = 7-epi-ent-eudesmane-5,11-diol + diphosphate. Its pathway is secondary metabolite biosynthesis; terpenoid biosynthesis. Its function is as follows. Component of the volatile terpenes biosynthesis pathways. Dihydroxylated sesquiterpenoid synthase that generates dually hydroxylated products directly from (E,E)-farnesyl diphosphate, primarily eudesmane-2,11-diol, along with two closely related structural isomers. This chain is Eudesmanediol synthase, found in Zea mays (Maize).